A 194-amino-acid polypeptide reads, in one-letter code: Lysozyme g (194 aa).

Catalysis depends on residues Glu-71 and Asp-84.

It belongs to the glycosyl hydrolase 23 family. Expressed in intestine, liver, spleen, anterior kidney, posterior kidney, heart, gill, muscle and leukocytes.

It catalyses the reaction Hydrolysis of (1-&gt;4)-beta-linkages between N-acetylmuramic acid and N-acetyl-D-glucosamine residues in a peptidoglycan and between N-acetyl-D-glucosamine residues in chitodextrins.. Has lytic activity against M.lysodeikticus, V.alginolyticus from Epinephelus fario, V.vulnificus from culture water, A.hydrophila from soft-shell turtle, A.hydrophila from goldfish and V.parahaemolyticus, P.fluorescens and V.fluvialis from culture water. The chain is Lysozyme g from Epinephelus coioides (Orange-spotted grouper).